The following is a 434-amino-acid chain: UDP-glucose 6-dehydrogenase (434 aa).

Residues 2–19 (NITF…GIIM), Val11, Asp30, Lys35, Thr121, and Glu152 contribute to the NAD(+) site. Residues 148-152 (EFLRE), Lys204, Asn208, 249-253 (FLNAG), and Gly257 each bind substrate. Residue Cys260 is the Nucleophile of the active site. An NAD(+)-binding site is contributed by Lys263. Substrate is bound at residue Lys321. Position 328 (Arg328) interacts with NAD(+).

Belongs to the UDP-glucose/GDP-mannose dehydrogenase family.

It catalyses the reaction UDP-alpha-D-glucose + 2 NAD(+) + H2O = UDP-alpha-D-glucuronate + 2 NADH + 3 H(+). Its pathway is nucleotide-sugar biosynthesis; UDP-alpha-D-glucuronate biosynthesis; UDP-alpha-D-glucuronate from UDP-alpha-D-glucose: step 1/1. The chain is UDP-glucose 6-dehydrogenase (udg) from Rickettsia prowazekii (strain Madrid E).